The sequence spans 424 residues: MSLALGCVADDYTGASDLANTLTKAGLRTIQTIGVPEAGRALPEADAVVVALKSRSIPADQAVARSREAERWLRARGAAHVMFKVCSTFDSTDAGNIGPVMDALRADAGETVALVTPAFPETGRSVYQGNLFVGSVPLNESPLKDHPLNPMRDANLVRVLGRQSRSPVGLIDTATVARGAEAVAARLDALAQEGKGAAIADAIFDSDLEVLGRAILDRKFSVGASGLGLGLARALAADGRGTRDAAGAAVGEPVGGASACLAGSCSQATLQQVAAAEAIMPVLRLDPARLLAGDDVVAEALAFAEERLASGPVLIATSAPPEAVRALQAAHGVDAAGHAIEAALAAIAEGLVARGVRRLVVAGGETSGAVVDRLGLTAFLLGPEIAAGVPVLRTAGRPEPMLLALKSGNFGGADFFGRALDMMA.

Residues serine 264, 363–366 (GGET), and glycine 408 contribute to the ATP site.

It belongs to the four-carbon acid sugar kinase family.

The enzyme catalyses 3-dehydro-L-erythronate + ATP = 3-dehydro-4-O-phospho-L-erythronate + ADP + H(+). It carries out the reaction 3-dehydro-D-erythronate + ATP = 3-dehydro-4-O-phospho-D-erythronate + ADP + H(+). In terms of biological role, catalyzes the ATP-dependent phosphorylation of 3-oxo-tetronate to 3-oxo-tetronate 4-phosphate. This is 3-oxo-tetronate kinase from Methylobacterium radiotolerans (strain ATCC 27329 / DSM 1819 / JCM 2831 / NBRC 15690 / NCIMB 10815 / 0-1).